The sequence spans 388 residues: Chorismate synthase (388 aa).

NADP(+)-binding residues include arginine 39 and arginine 45. FMN-binding positions include 130–132 (RSS), 251–252 (NA), glycine 296, 311–315 (KPIPT), and arginine 337.

The protein belongs to the chorismate synthase family. Homotetramer. The cofactor is FMNH2.

It catalyses the reaction 5-O-(1-carboxyvinyl)-3-phosphoshikimate = chorismate + phosphate. Its pathway is metabolic intermediate biosynthesis; chorismate biosynthesis; chorismate from D-erythrose 4-phosphate and phosphoenolpyruvate: step 7/7. Its function is as follows. Catalyzes the anti-1,4-elimination of the C-3 phosphate and the C-6 proR hydrogen from 5-enolpyruvylshikimate-3-phosphate (EPSP) to yield chorismate, which is the branch point compound that serves as the starting substrate for the three terminal pathways of aromatic amino acid biosynthesis. This reaction introduces a second double bond into the aromatic ring system. The polypeptide is Chorismate synthase (Geobacillus kaustophilus (strain HTA426)).